The sequence spans 884 residues: Formin-like protein 11 (884 aa).

A signal peptide spans 1–18; it reads MVYFRQIFLMIIVVSLHC. Residues 89 to 143 form a disordered region; sequence AESASFSPWPAPSPSPFPNGGPIESPAYPPAPPRPIPPHLRRPLPQRTHPLEQPE. 2 stretches are compositionally biased toward pro residues: residues 97–107 and 115–126; these read WPAPSPSPFPN and AYPPAPPRPIPP. A helical transmembrane segment spans residues 158–178; that stretch reads ILVPVVASTASAIGFVVCVVG. 3 disordered regions span residues 307–384, 416–469, and 512–532; these read SSDD…FSNK, SFPI…APLP, and MQSSTKNEEGKSKTPSPGKHL. A compositionally biased stretch (low complexity) spans 329–343; it reads SNASSASGSVNVGSS. Residues 346–358 show a composition bias toward basic and acidic residues; that stretch reads FSEHKLDIPECSR. Pro residues-rich tracts occupy residues 367 to 379 and 425 to 436; these read APPPPPPPPPPLP and QPRPPPPPPPPQ. In terms of domain architecture, FH2 spans 461-884; the sequence is LGKDGAPLPK…NSPSPLAPFR (424 aa).

Belongs to the formin-like family. Class-I subfamily.

Its subcellular location is the membrane. Functionally, might be involved in the organization and polarity of the actin cytoskeleton. This chain is Formin-like protein 11 (FH11), found in Arabidopsis thaliana (Mouse-ear cress).